A 296-amino-acid polypeptide reads, in one-letter code: Phosphatidylserine decarboxylase proenzyme (296 aa).

Catalysis depends on charge relay system; for autoendoproteolytic cleavage activity residues D100, H157, and S263. Catalysis depends on S263, which acts as the Schiff-base intermediate with substrate; via pyruvic acid; for decarboxylase activity. S263 carries the pyruvic acid (Ser); by autocatalysis modification.

This sequence belongs to the phosphatidylserine decarboxylase family. PSD-B subfamily. Prokaryotic type I sub-subfamily. Heterodimer of a large membrane-associated beta subunit and a small pyruvoyl-containing alpha subunit. Pyruvate serves as cofactor. Post-translationally, is synthesized initially as an inactive proenzyme. Formation of the active enzyme involves a self-maturation process in which the active site pyruvoyl group is generated from an internal serine residue via an autocatalytic post-translational modification. Two non-identical subunits are generated from the proenzyme in this reaction, and the pyruvate is formed at the N-terminus of the alpha chain, which is derived from the carboxyl end of the proenzyme. The autoendoproteolytic cleavage occurs by a canonical serine protease mechanism, in which the side chain hydroxyl group of the serine supplies its oxygen atom to form the C-terminus of the beta chain, while the remainder of the serine residue undergoes an oxidative deamination to produce ammonia and the pyruvoyl prosthetic group on the alpha chain. During this reaction, the Ser that is part of the protease active site of the proenzyme becomes the pyruvoyl prosthetic group, which constitutes an essential element of the active site of the mature decarboxylase.

It is found in the cell membrane. The catalysed reaction is a 1,2-diacyl-sn-glycero-3-phospho-L-serine + H(+) = a 1,2-diacyl-sn-glycero-3-phosphoethanolamine + CO2. It functions in the pathway phospholipid metabolism; phosphatidylethanolamine biosynthesis; phosphatidylethanolamine from CDP-diacylglycerol: step 2/2. Its function is as follows. Catalyzes the formation of phosphatidylethanolamine (PtdEtn) from phosphatidylserine (PtdSer). In Actinobacillus pleuropneumoniae serotype 7 (strain AP76), this protein is Phosphatidylserine decarboxylase proenzyme.